Consider the following 472-residue polypeptide: Tryptophan--tRNA ligase, cytoplasmic (472 aa).

A WHEP-TRS domain is found at 9–65 (SPLELFNSIATQGELVRSLKAGNASKDEIDSAVKMLLSLKMSYKAAMGEDYKANCPP). Lys-155 is subject to N6-succinyllysine. Positions 165-174 (PSSEAMHVGH) match the 'HIGH' region motif. Residues 350–354 (KMSAS) carry the 'KMSKS' region motif. At Ser-352 the chain carries Phosphoserine.

The protein belongs to the class-I aminoacyl-tRNA synthetase family. Homodimer. Interacts with oxidized form of GAPDH. Post-translationally, proteolytic cleavage generates 2 forms; T1-TrpRS and T2-TrpRS.

It is found in the cytoplasm. It carries out the reaction tRNA(Trp) + L-tryptophan + ATP = L-tryptophyl-tRNA(Trp) + AMP + diphosphate + H(+). In terms of biological role, catalyzes the attachment of tryptophan to tRNA(Trp) in a two-step reaction: tryptophan is first activated by ATP to form Trp-AMP and then transferred to the acceptor end of the tRNA(Trp). Could also possess an angiostatic activity. In Pongo abelii (Sumatran orangutan), this protein is Tryptophan--tRNA ligase, cytoplasmic (WARS1).